The following is a 273-amino-acid chain: SPRY domain-containing SOCS box protein 4 (273 aa).

A B30.2/SPRY domain is found at 34 to 233; that stretch reads PARLDQLLDM…MRYINGLDPE (200 aa). Residues 234 to 273 enclose the SOCS box domain; that stretch reads PLPLMDLCRRSIRSALGRQRLRDIGSLPLPQSLKNYLQYQ.

Belongs to the SPSB family. In terms of assembly, component of the probable ECS(SPSB4) E3 ubiquitin-protein ligase complex which contains CUL5, RNF7/RBX2, Elongin BC complex and SPSB4. Interacts with CUL5; RNF7; ELOB and ELOC. Interacts with MET. Interacts (via B30.2/SPRY domain) with PAWR; this interaction occurs in association with the Elongin BC complex. Interacts with NOS2. Interacts with EPHB2.

Its subcellular location is the cytoplasm. It is found in the cytosol. The protein operates within protein modification; protein ubiquitination. Its function is as follows. Substrate recognition component of a SCF-like ECS (Elongin BC-CUL2/5-SOCS-box protein) E3 ubiquitin-protein ligase complex which mediates the ubiquitination and subsequent proteasomal degradation of target proteins. Negatively regulates nitric oxide (NO) production and limits cellular toxicity in activated macrophages by mediating the ubiquitination and proteasomal degradation of NOS2. Acts as a bridge which links NOS2 with the ECS E3 ubiquitin ligase complex components ELOC and CUL5. Diminishes EphB2-dependent cell repulsive responses by mediating the ubiquitination and degradation of the EphB2/CTF2. Regulates cellular clock function by mediating ubiquitination and proteasomal degradation of the circadian transcriptional repressor NR1D1. The protein is SPRY domain-containing SOCS box protein 4 (Spsb4) of Mus musculus (Mouse).